Consider the following 328-residue polypeptide: Probable ABC transporter permease YtrC (328 aa).

The next 8 helical transmembrane spans lie at 16 to 36, 60 to 80, 110 to 130, 144 to 164, 167 to 187, 236 to 256, 277 to 297, and 300 to 320; these read VVILLSIAFLVLANPLSIVNT, ISNLIDINWVPGVILAVCFLG, GFVIVLSQLIGFLLAWLLILV, IGVIVISFMAFSLVMAAGALT, AFAQLLTAFSAAILPYLIIAL, YLLLIPAVMSMLFYLIGFISF, VQILVMAFGILGFGLFGYYTG, and IIGYILGMIIGAVAGFFVSYF.

It belongs to the ABC-5 integral membrane protein family. The complex is composed of 2 ATP-binding proteins (YtrB and YtrE), 2 transmembrane proteins (YtrC and YtrD) and a solute-binding protein (YtrF).

Its subcellular location is the cell membrane. Its function is as follows. Part of the ABC transporter complex YtrBCDEF that plays a role in acetoin utilization during stationary phase and sporulation. In Bacillus subtilis (strain 168), this protein is Probable ABC transporter permease YtrC (ytrC).